The chain runs to 273 residues: Dermonecrotic toxin LdSicTox-alphaIB1aiv (273 aa).

The active site involves H5. The Mg(2+) site is built by E25 and D27. H41 functions as the Nucleophile in the catalytic mechanism. Disulfide bonds link C45/C51 and C47/C190. Residue D85 participates in Mg(2+) binding. N-linked (GlcNAc...) asparagine glycosylation occurs at N250.

Belongs to the arthropod phospholipase D family. Class II subfamily. Mg(2+) is required as a cofactor. Expressed by the venom gland.

Its subcellular location is the secreted. The enzyme catalyses an N-(acyl)-sphingosylphosphocholine = an N-(acyl)-sphingosyl-1,3-cyclic phosphate + choline. It carries out the reaction an N-(acyl)-sphingosylphosphoethanolamine = an N-(acyl)-sphingosyl-1,3-cyclic phosphate + ethanolamine. It catalyses the reaction a 1-acyl-sn-glycero-3-phosphocholine = a 1-acyl-sn-glycero-2,3-cyclic phosphate + choline. The catalysed reaction is a 1-acyl-sn-glycero-3-phosphoethanolamine = a 1-acyl-sn-glycero-2,3-cyclic phosphate + ethanolamine. Functionally, dermonecrotic toxins cleave the phosphodiester linkage between the phosphate and headgroup of certain phospholipids (sphingolipid and lysolipid substrates), forming an alcohol (often choline) and a cyclic phosphate. This toxin acts on sphingomyelin (SM). It may also act on ceramide phosphoethanolamine (CPE), lysophosphatidylcholine (LPC) and lysophosphatidylethanolamine (LPE), but not on lysophosphatidylserine (LPS), and lysophosphatidylglycerol (LPG). It acts by transphosphatidylation, releasing exclusively cyclic phosphate products as second products. Induces dermonecrosis, hemolysis, increased vascular permeability, edema, inflammatory response, and platelet aggregation. This Loxosceles deserta (Desert recluse spider) protein is Dermonecrotic toxin LdSicTox-alphaIB1aiv.